We begin with the raw amino-acid sequence, 424 residues long: Probable methyltransferase EP424R (424 aa).

Residues 103–315 form the Adrift-type SAM-dependent 2'-O-MTase domain; it reads QIVTNAWLKM…TYIVGKNRLR (213 aa). Residues Gly135 and Asp228 each coordinate S-adenosyl-L-methionine. Catalysis depends on Lys268, which acts as the Proton acceptor.

It is found in the virion. In Ornithodoros (relapsing fever ticks), this protein is Probable methyltransferase EP424R.